Reading from the N-terminus, the 345-residue chain is Calcium/calmodulin-dependent protein kinase type 1 (345 aa).

Residues 1–23 form a disordered region; that stretch reads MPLFGSKKETAKKSSKKDKDEGK. In terms of domain architecture, Protein kinase spans 31–287; that stretch reads YILKDLLGTG…CKQALGHPWI (257 aa). Residues 37 to 45 and Lys-61 each bind ATP; that span reads LGTGAFSQV. The Proton acceptor role is filled by Asp-153. The interval 287–327 is autoinhibitory domain; sequence ISGNAASTENIHSSVSEQLKKNFAKSRWRQAYHATAVIRQM. The calmodulin-binding stretch occupies residues 307–328; sequence KNFAKSRWRQAYHATAVIRQMR.

This sequence belongs to the protein kinase superfamily. CAMK Ser/Thr protein kinase family. CaMK subfamily. Highly expressed in hepatopancreas and to a lesser extent in gills. Low expression in hemocytes, testis, ovary, heart, eyestalk, muscle and epidermis.

It carries out the reaction L-seryl-[protein] + ATP = O-phospho-L-seryl-[protein] + ADP + H(+). It catalyses the reaction L-threonyl-[protein] + ATP = O-phospho-L-threonyl-[protein] + ADP + H(+). Activated by Ca(2+)/calmodulin. Binding of calmodulin results in conformational change that relieves intrasteric autoinhibition. Calcium/calmodulin-dependent protein kinase that operates in the calcium-triggered CaMKK-CaMK1 signaling cascade and, upon calcium influx, regulates transcription activators activity, cell cycle, hormone production, cell differentiation, actin filament organization and neurite outgrowth. Involved in molting. This is Calcium/calmodulin-dependent protein kinase type 1 from Macrobrachium nipponense (Oriental river shrimp).